Consider the following 495-residue polypeptide: Probable endopolygalacturonase D (495 aa).

A signal peptide spans Met-1 to Gly-16. A disulfide bond links Cys-154 and Cys-169. 3 PbH1 repeats span residues Met-261–Asn-283, Thr-284–Gln-322, and Ser-323–Ser-344. Residue Asn-295 is glycosylated (N-linked (GlcNAc...) asparagine). The Proton donor role is filled by Asp-337. An intrachain disulfide couples Cys-339 to Cys-355. His-359 is a catalytic residue. Asn-371 is a glycosylation site (N-linked (GlcNAc...) asparagine). PbH1 repeat units lie at residues Val-374 to Ser-395 and Val-403 to Gln-425. Residues Asn-410 and Asn-444 are each glycosylated (N-linked (GlcNAc...) asparagine). Intrachain disulfides connect Cys-464/Cys-469 and Cys-487/Cys-494. The PbH1 6 repeat unit spans residues Cys-469–Ser-492.

The protein belongs to the glycosyl hydrolase 28 family.

It localises to the secreted. The catalysed reaction is (1,4-alpha-D-galacturonosyl)n+m + H2O = (1,4-alpha-D-galacturonosyl)n + (1,4-alpha-D-galacturonosyl)m.. Its function is as follows. Involved in maceration and soft-rotting of plant tissue. Hydrolyzes the 1,4-alpha glycosidic bonds of de-esterified pectate in the smooth region of the plant cell wall. The chain is Probable endopolygalacturonase D (pgaD) from Aspergillus niger (strain ATCC MYA-4892 / CBS 513.88 / FGSC A1513).